The chain runs to 310 residues: MEPQNTTQVSMFVLLGFSQTQELQKFLFLLFLLVYVTTIVGNLLIMVTVTFDCRLHTPMYFLLRNLALIDLCYSTVTSPKMLVDFLHETKTISYQGCMAQIFFFHLLGGGTVFFLSVMAYDRYIAISQPLRYVTIMNTQLCVGLVVAAWVGGFVHSIVQLALILPLPFCGPNILDNFYCDVPQVLRLACTDTSLLEFLMISNSGLLVIIWFLLLLISYTVILVMLRSHSGKARRKAASTCTTHIIVVSMIFIPCIYIYTWPFTPFLMDKAVSISYTVMTPMLNPMIYTLRNQDMKAAMRRLGKCLVICRE.

Over 1–25 (MEPQNTTQVSMFVLLGFSQTQELQK) the chain is Extracellular. Residue Asn5 is glycosylated (N-linked (GlcNAc...) asparagine). A helical membrane pass occupies residues 26–49 (FLFLLFLLVYVTTIVGNLLIMVTV). The Cytoplasmic portion of the chain corresponds to 50 to 57 (TFDCRLHT). Residues 58-79 (PMYFLLRNLALIDLCYSTVTSP) form a helical membrane-spanning segment. Residues 80 to 100 (KMLVDFLHETKTISYQGCMAQ) are Extracellular-facing. An intrachain disulfide couples Cys97 to Cys189. Residues 101-120 (IFFFHLLGGGTVFFLSVMAY) form a helical membrane-spanning segment. Residues 121–139 (DRYIAISQPLRYVTIMNTQ) lie on the Cytoplasmic side of the membrane. A helical membrane pass occupies residues 140–158 (LCVGLVVAAWVGGFVHSIV). Residues 159 to 195 (QLALILPLPFCGPNILDNFYCDVPQVLRLACTDTSLL) are Extracellular-facing. Residues 196–219 (EFLMISNSGLLVIIWFLLLLISYT) traverse the membrane as a helical segment. Residues 220–235 (VILVMLRSHSGKARRK) lie on the Cytoplasmic side of the membrane. Residues 236 to 258 (AASTCTTHIIVVSMIFIPCIYIY) traverse the membrane as a helical segment. The Extracellular portion of the chain corresponds to 259–269 (TWPFTPFLMDK). A helical transmembrane segment spans residues 270-289 (AVSISYTVMTPMLNPMIYTL). Over 290-310 (RNQDMKAAMRRLGKCLVICRE) the chain is Cytoplasmic.

Belongs to the G-protein coupled receptor 1 family.

The protein resides in the cell membrane. Odorant receptor. The chain is Olfactory receptor 4D1 (OR4D1) from Homo sapiens (Human).